The chain runs to 467 residues: AT-rich interactive domain-containing protein cfi-1 (467 aa).

A disordered region spans residues 1–56 (MSVRIDEPQLFVSMSKEPTQETVNVGGHHDDSSSNCDERVDDQTEEQKSPPASPDL). Positions 27 to 48 (GHHDDSSSNCDERVDDQTEEQK) are enriched in basic and acidic residues. The ARID domain occupies 181–273 (DVKRKEWLDD…YLYDYECEKE (93 aa)). In terms of domain architecture, REKLES spans 356 to 464 (AILEAHQRNL…GVLFALDETV (109 aa)). Residues 383–441 (LTACSNGNGGNIHNSGRESTSSNDSDIPAKRPKLENDVKTNGASSMRISTKHSDNSKTS) form a disordered region. The span at 409-420 (IPAKRPKLENDV) shows a compositional bias: basic and acidic residues. Residues 421 to 430 (KTNGASSMRI) are compositionally biased toward polar residues.

Present in IL2 and URA neurons, and in AVD and PVC interneurons. Present in muscles from head and pharynx (at protein level).

Its subcellular location is the nucleus. In terms of biological role, transcription factor. Regulates neuronal subtype identity. Involved in motor neuron fate determination and maintenance, acting as a transcriptional repressor to counteract gene activation by transcription factor unc-3 in a subset of motor neurons. Probably acts by binding to specific promoter elements. Promotes differentiation of URA sensory neurons and prevents them from expressing male-specific CEM neuronal features. Promotes differentiation of AVD and PVC interneurons and their glutamate receptor expression. The chain is AT-rich interactive domain-containing protein cfi-1 (cfi-1) from Caenorhabditis elegans.